A 225-amino-acid chain; its full sequence is Thymidylate kinase (225 aa).

15-22 (GGEGSGKS) provides a ligand contact to ATP.

This sequence belongs to the thymidylate kinase family.

The enzyme catalyses dTMP + ATP = dTDP + ADP. In terms of biological role, phosphorylation of dTMP to form dTDP in both de novo and salvage pathways of dTTP synthesis. This is Thymidylate kinase from Protochlamydia amoebophila (strain UWE25).